An 893-amino-acid chain; its full sequence is Alanine--tRNA ligase (893 aa).

4 residues coordinate Zn(2+): H575, H579, C677, and H681.

The protein belongs to the class-II aminoacyl-tRNA synthetase family. Requires Zn(2+) as cofactor.

It localises to the cytoplasm. The enzyme catalyses tRNA(Ala) + L-alanine + ATP = L-alanyl-tRNA(Ala) + AMP + diphosphate. Functionally, catalyzes the attachment of alanine to tRNA(Ala) in a two-step reaction: alanine is first activated by ATP to form Ala-AMP and then transferred to the acceptor end of tRNA(Ala). Also edits incorrectly charged Ser-tRNA(Ala) and Gly-tRNA(Ala) via its editing domain. In Synechococcus sp. (strain CC9311), this protein is Alanine--tRNA ligase.